The primary structure comprises 1203 residues: DNA-directed RNA polymerase subunit beta' (1203 aa).

4 residues coordinate Zn(2+): Cys60, Cys62, Cys75, and Cys78. Mg(2+) contacts are provided by Asp449, Asp451, and Asp453. Positions 818, 892, 899, and 902 each coordinate Zn(2+).

The protein belongs to the RNA polymerase beta' chain family. In terms of assembly, the RNAP catalytic core consists of 2 alpha, 1 beta, 1 beta' and 1 omega subunit. When a sigma factor is associated with the core the holoenzyme is formed, which can initiate transcription. Mg(2+) is required as a cofactor. Zn(2+) serves as cofactor.

It carries out the reaction RNA(n) + a ribonucleoside 5'-triphosphate = RNA(n+1) + diphosphate. Its function is as follows. DNA-dependent RNA polymerase catalyzes the transcription of DNA into RNA using the four ribonucleoside triphosphates as substrates. The chain is DNA-directed RNA polymerase subunit beta' from Bacillus thuringiensis (strain Al Hakam).